The chain runs to 615 residues: tRNA uridine 5-carboxymethylaminomethyl modification enzyme MnmG (615 aa).

FAD is bound at residue 11 to 16 (GLGHAG). Position 278-292 (278-292 (GPRYCPSLEDKVVRF)) interacts with NAD(+).

Belongs to the MnmG family. As to quaternary structure, homodimer. Heterotetramer of two MnmE and two MnmG subunits. Requires FAD as cofactor.

It is found in the cytoplasm. NAD-binding protein involved in the addition of a carboxymethylaminomethyl (cmnm) group at the wobble position (U34) of certain tRNAs, forming tRNA-cmnm(5)s(2)U34. The sequence is that of tRNA uridine 5-carboxymethylaminomethyl modification enzyme MnmG from Myxococcus xanthus (strain DK1622).